The sequence spans 721 residues: Mitogen-activated protein kinase 6 (721 aa).

The 297-residue stretch at 20 to 316 (YMDLKPLGCG…AEEALSHPYM (297 aa)) folds into the Protein kinase domain. ATP-binding positions include 26–34 (LGCGGNGLV) and K49. The active-site Proton acceptor is D152. Position 626 is a phosphothreonine (T626). The short motif at 626–628 (TSY) is the TXY element. Y628 is subject to Phosphotyrosine.

The protein belongs to the protein kinase superfamily. CMGC Ser/Thr protein kinase family. MAP kinase subfamily. It depends on Mg(2+) as a cofactor. In terms of processing, dually phosphorylated on Thr-626 and Tyr-628, which activates the enzyme.

It carries out the reaction L-seryl-[protein] + ATP = O-phospho-L-seryl-[protein] + ADP + H(+). The catalysed reaction is L-threonyl-[protein] + ATP = O-phospho-L-threonyl-[protein] + ADP + H(+). Its activity is regulated as follows. Activated by threonine and tyrosine phosphorylation. In terms of biological role, phosphorylates microtubule-associated protein 2 (MAP2). May promote entry in the cell cycle. This Gallus gallus (Chicken) protein is Mitogen-activated protein kinase 6 (MAPK6).